Reading from the N-terminus, the 89-residue chain is Large ribosomal subunit protein eL34 (89 aa).

A disordered region spans residues 1–22; sequence MPAPRYKSGSSKKVYRKAPGNS.

Belongs to the eukaryotic ribosomal protein eL34 family.

The protein is Large ribosomal subunit protein eL34 of Methanococcus maripaludis (strain C5 / ATCC BAA-1333).